We begin with the raw amino-acid sequence, 90 residues long: Small ribosomal subunit protein uS17 (90 aa).

It belongs to the universal ribosomal protein uS17 family. As to quaternary structure, part of the 30S ribosomal subunit.

In terms of biological role, one of the primary rRNA binding proteins, it binds specifically to the 5'-end of 16S ribosomal RNA. The polypeptide is Small ribosomal subunit protein uS17 (Gluconobacter oxydans (strain 621H) (Gluconobacter suboxydans)).